The following is a 421-amino-acid chain: Alpha-tubulin N-acetyltransferase 1 (421 aa).

The region spanning 1–190 (MEFPFDVDAL…NNFVIFEGFF (190 aa)) is the N-acetyltransferase domain. Lys56 bears the N6-acetyllysine; by autocatalysis mark. An acetyl-CoA-binding site is contributed by 124-137 (FYIHESVQRHGHGR). At Lys146 the chain carries N6-acetyllysine; by autocatalysis. 160-169 (SQKLLKFLNK) serves as a coordination point for acetyl-CoA. Positions 196–235 (PPAPSLRATRHSRAAAVDPTPAAPARKLPPKRAEGDIKPY) are disordered. The span at 209–221 (AAAVDPTPAAPAR) shows a compositional bias: low complexity. Positions 226–235 (KRAEGDIKPY) are enriched in basic and acidic residues. N6-acetyllysine; by autocatalysis occurs at positions 233 and 244. A disordered region spans residues 252–284 (PLNRAPRRATPPAHPPPRSSSLGNSPERGPLRP). 2 positions are modified to phosphoserine: Ser272 and Ser276. Position 305 is an asymmetric dimethylarginine (Arg305). Positions 306–402 (LLLAADPGGS…PAQSWTVGGD (97 aa)) are disordered. A Phosphoserine modification is found at Ser315. At Arg323 the chain carries Omega-N-methylarginine. The span at 342 to 354 (VNSSSPNTGNQDS) shows a compositional bias: polar residues. A compositionally biased stretch (basic and acidic residues) spans 355 to 367 (KQGEQETKNRSAS).

This sequence belongs to the acetyltransferase ATAT1 family. In terms of assembly, component of the BBSome complex. Interacts with AP2 alpha-adaptins, including AP2A2, but not with AP1 gamma-adaptin (AP1G1/AP1G2); this interaction is required for efficient alpha-tubulin acetylation, hence clathrin-coated pits are sites of microtubule acetylation. Autoacetylation strongly increases tubulin acetylation.

It is found in the cytoplasm. The protein localises to the membrane. The protein resides in the clathrin-coated pit. Its subcellular location is the cell junction. It localises to the focal adhesion. It is found in the cell projection. The protein localises to the axon. The protein resides in the cytoskeleton. Its subcellular location is the spindle. It catalyses the reaction L-lysyl-[alpha-tubulin] + acetyl-CoA = N(6)-acetyl-L-lysyl-[alpha-tubulin] + CoA + H(+). Its function is as follows. Specifically acetylates 'Lys-40' in alpha-tubulin on the lumenal side of microtubules. Promotes microtubule destabilization and accelerates microtubule dynamics; this activity may be independent of acetylation activity. Acetylates alpha-tubulin with a slow enzymatic rate, due to a catalytic site that is not optimized for acetyl transfer. Enters the microtubule through each end and diffuses quickly throughout the lumen of microtubules. Acetylates only long/old microtubules because of its slow acetylation rate since it does not have time to act on dynamically unstable microtubules before the enzyme is released. Required for normal sperm flagellar function. Promotes directional cell locomotion and chemotaxis, through AP2A2-dependent acetylation of alpha-tubulin at clathrin-coated pits that are concentrated at the leading edge of migrating cells. May facilitate primary cilium assembly. The chain is Alpha-tubulin N-acetyltransferase 1 from Homo sapiens (Human).